Reading from the N-terminus, the 470-residue chain is MVVGDFPIETDTLVIGAGPGGYVAAIRAAQLGQKVTVVEKATLGGVCLNVGCIPSKALINAGHRYENAKHSDDMGITAENVTVDFTKVQEWKASVVNKLTGGVAGLLKGNKVDVVKGEAYFVDSNSVRVMDENSAQTYTFKNAIIATGSRPIELPNFKYSERVLNSTGALALKEIPKKLVVIGGGYIGTELGTAYANFGTELVILEGGDEILPGFEKQMSSLVTRRLKKKGNVEIHTNAMAKGVEERPDGVTVTFEVKGEEKTVDADYVLITVGRRPNTDELGLEQVGIEMTDRGIVKTDKQCRTNVPNIYAIGDIIEGPPLAHKASYEGKIAAEAIAGEPAEIDYLGIPAVVFSEPELASVGYTEAQAKEEGLDIVAAKFPFAANGRALSLNETDGFMKLITRKEDGLVIGAQIAGASASDMISELSLAIEGGMTAEDIAMTIHAHPTLGEITMEAAEVAIGSPIHIVK.

Residues 39–47 (EKATLGGVC), lysine 56, and alanine 119 contribute to the FAD site. A disulfide bridge links cysteine 47 with cysteine 52. NAD(+)-binding positions include 183–187 (GGGYI), glutamate 206, and 272–275 (TVGR). Aspartate 315 and alanine 323 together coordinate FAD. Catalysis depends on histidine 447, which acts as the Proton acceptor.

Belongs to the class-I pyridine nucleotide-disulfide oxidoreductase family. Homodimer. Component of two multienzyme complexes: pyruvate dehydrogenase complex and oxoglutarate dehydrogenase complex. FAD serves as cofactor.

The protein localises to the cytoplasm. The enzyme catalyses N(6)-[(R)-dihydrolipoyl]-L-lysyl-[protein] + NAD(+) = N(6)-[(R)-lipoyl]-L-lysyl-[protein] + NADH + H(+). Functionally, catalyzes the oxidation of dihydrolipoamide to lipoamide. The chain is Dihydrolipoyl dehydrogenase (pdhD) from Bacillus subtilis (strain 168).